We begin with the raw amino-acid sequence, 552 residues long: MTKFVFVTGGVVSSLGKGIASASLAAILESRGLKVTLIKLDPYINVDPGTMSPFQHGEVFVTDDGAETDLDLGHYERFIETRMKQANNFTTGRIYQSVLEKERRGDYLGKTVQVIPHVTNEIQEFIKRGAGIGTPDAVDVAICEVGGTVGDIESLPFLEAVRQLSLKLGPNNSAFVHLTYLPWIAAAGELKTKPTQHTVQKLREIGIQPDALLCRALHAVPEEEKEKISLFTNVAEWGVISMWDVDTIYKVPRMLHEQGLDGLICDKLRLNTPPANLKRWDDLVYETEHPRGEVQIAMVGKYVELSDAYKSVNEALKHAGMQSHVRVKITHLDSETITDDNAAQQLAQYDAILVPGGFGSRGVEGKISTARYAREHKVPYLGICLGMQVATIEYARHVAGLAGANSTEFDAHCKHPVIALITEWKDEDGTIKTRDANSDLGGTMRLGAQSSDVQPGTLAHSIYGDVVTERHRHRYEANVQYLDKLRTAGLVISALTQREHLTEIVELPKSVHPWYIGVQFHPEFKSTPWSGHPLFNAFIKAAVEHQKPAAKA.

Residues 1–270 (MTKFVFVTGG…DGLICDKLRL (270 aa)) form an amidoligase domain region. Ser13 provides a ligand contact to CTP. Ser13 lines the UTP pocket. Residues 14 to 19 (SLGKGI) and Asp71 contribute to the ATP site. The Mg(2+) site is built by Asp71 and Glu144. Residues 151-153 (DIE), 191-196 (KTKPTQ), and Lys227 each bind CTP. UTP is bound by residues 191–196 (KTKPTQ) and Lys227. Positions 295–548 (QIAMVGKYVE…IKAAVEHQKP (254 aa)) constitute a Glutamine amidotransferase type-1 domain. Gly357 is a binding site for L-glutamine. Cys384 serves as the catalytic Nucleophile; for glutamine hydrolysis. Residues 385–388 (LGMQ), Glu408, and Arg474 each bind L-glutamine. Catalysis depends on residues His521 and Glu523.

The protein belongs to the CTP synthase family. As to quaternary structure, homotetramer.

The enzyme catalyses UTP + L-glutamine + ATP + H2O = CTP + L-glutamate + ADP + phosphate + 2 H(+). The catalysed reaction is L-glutamine + H2O = L-glutamate + NH4(+). It carries out the reaction UTP + NH4(+) + ATP = CTP + ADP + phosphate + 2 H(+). It functions in the pathway pyrimidine metabolism; CTP biosynthesis via de novo pathway; CTP from UDP: step 2/2. Its activity is regulated as follows. Allosterically activated by GTP, when glutamine is the substrate; GTP has no effect on the reaction when ammonia is the substrate. The allosteric effector GTP functions by stabilizing the protein conformation that binds the tetrahedral intermediate(s) formed during glutamine hydrolysis. Inhibited by the product CTP, via allosteric rather than competitive inhibition. Functionally, catalyzes the ATP-dependent amination of UTP to CTP with either L-glutamine or ammonia as the source of nitrogen. Regulates intracellular CTP levels through interactions with the four ribonucleotide triphosphates. In Acidovorax ebreus (strain TPSY) (Diaphorobacter sp. (strain TPSY)), this protein is CTP synthase.